The chain runs to 404 residues: Pectate lyase E (404 aa).

The N-terminal stretch at 1 to 41 is a signal peptide; it reads MNNSRMSSVSTQKTTGRSALGTKSALAAIIATTMMVSVASA. Positions 182 and 225 each coordinate Ca(2+). Arginine 278 is an active-site residue.

Belongs to the polysaccharide lyase 1 family. PLBC subfamily. The cofactor is Ca(2+).

It localises to the secreted. The enzyme catalyses Eliminative cleavage of (1-&gt;4)-alpha-D-galacturonan to give oligosaccharides with 4-deoxy-alpha-D-galact-4-enuronosyl groups at their non-reducing ends.. It functions in the pathway glycan metabolism; pectin degradation; 2-dehydro-3-deoxy-D-gluconate from pectin: step 2/5. Involved in maceration and soft-rotting of plant tissue. Pectate lyases have been implicated as pathogenicity factors which induce maceration or rotting of plant tissue. PelE is sufficient to induce these effects under laboratory conditions. This is Pectate lyase E (pelE) from Dickeya chrysanthemi (Pectobacterium chrysanthemi).